The chain runs to 143 residues: Large ribosomal subunit protein uL11 (143 aa).

Belongs to the universal ribosomal protein uL11 family. In terms of assembly, part of the ribosomal stalk of the 50S ribosomal subunit. Interacts with L10 and the large rRNA to form the base of the stalk. L10 forms an elongated spine to which L12 dimers bind in a sequential fashion forming a multimeric L10(L12)X complex. One or more lysine residues are methylated.

Forms part of the ribosomal stalk which helps the ribosome interact with GTP-bound translation factors. The polypeptide is Large ribosomal subunit protein uL11 (Nitrosospira multiformis (strain ATCC 25196 / NCIMB 11849 / C 71)).